The chain runs to 176 residues: MTTASSADHPTRRDFLFVATGAAAAVGGAAALWPFISQMNPDASTIAAGAPIEVDLSPIAEGQDIKVFWRGKPIYISHRTKKQIDEARAVNVASLPDPQSDEARVKSGHEQWLVVIGICTHLGCIPIAHEGNYDGFFCPCHGSQYDSSGRIRQGPAPANLPVPPYQFVSDTKIQIG.

A helical membrane pass occupies residues 15 to 36; sequence FLFVATGAAAAVGGAAALWPFI. Positions 87–174 constitute a Rieske domain; sequence ARAVNVASLP…YQFVSDTKIQ (88 aa). [2Fe-2S] cluster-binding residues include Cys119, His121, Cys138, and His141. A disulfide bond links Cys124 and Cys140.

Belongs to the Rieske iron-sulfur protein family. The main subunits of complex b-c1 are: cytochrome b, cytochrome c1 and the Rieske protein. The cofactor is [2Fe-2S] cluster.

The protein localises to the cell membrane. It carries out the reaction a quinol + 2 Fe(III)-[cytochrome c](out) = a quinone + 2 Fe(II)-[cytochrome c](out) + 2 H(+)(out). Functionally, component of the ubiquinol-cytochrome c reductase complex (complex III or cytochrome b-c1 complex), which is a respiratory chain that generates an electrochemical potential coupled to ATP synthesis. The chain is Ubiquinol-cytochrome c reductase iron-sulfur subunit (petA) from Bradyrhizobium diazoefficiens (strain JCM 10833 / BCRC 13528 / IAM 13628 / NBRC 14792 / USDA 110).